A 224-amino-acid polypeptide reads, in one-letter code: Virulence transcriptional regulatory protein PhoP (224 aa).

Positions 3–117 constitute a Response regulatory domain; sequence RVLVVEDNAL…EVMARMQALM (115 aa). The residue at position 52 (aspartate 52) is a 4-aspartylphosphate. Positions 125-223 form a DNA-binding region, ompR/PhoB-type; sequence SQVINIPPFQ…VRGQGYLFEL (99 aa).

In terms of assembly, monomer in the inactive, unphosphorylated state and dimer in the active, phosphorylated state. Post-translationally, phosphorylated by PhoQ.

The protein resides in the cytoplasm. Functionally, member of the two-component regulatory system PhoP/PhoQ which regulates the expression of genes involved in virulence, adaptation to acidic and low Mg(2+) environments and resistance to host defense antimicrobial peptides. Essential for intramacrophage survival of S.typhimurium. In low periplasmic Mg(2+), PhoQ phosphorylates PhoP, resulting in the expression of PhoP-activated genes (PAG) and repression of PhoP-repressed genes (PRG). In high periplasmic Mg(2+), PhoQ dephosphorylates phospho-PhoP, resulting in the repression of PAG and may lead to expression of some PRG. Essential for transcription of spiC inside macrophages by controlling the expression of the two-component regulatory system SsrB/SpiR (SsrA) and Pir at transcriptional and post-transcriptional levels respectively. Promotes expression of the two-component regulatory system PmrA/PmrB via activation of pmrD gene. Is required to attenuate bacterial growth within fibroblast cells and to enhance bacterial resistance to bile in intestinal cells. Negatively regulates prgH, which is required for invasion of epithelial cells. PhoP uses multiple mechanisms to promote transcription and activates promoters for PAG at low (uM range) Mg(2+) concentrations. Involved in acid tolerance. The polypeptide is Virulence transcriptional regulatory protein PhoP (phoP) (Salmonella typhimurium (strain SL1344)).